A 115-amino-acid polypeptide reads, in one-letter code: NAD(P)H-quinone oxidoreductase subunit M (115 aa).

Belongs to the complex I NdhM subunit family. As to quaternary structure, NDH-1 can be composed of about 15 different subunits; different subcomplexes with different compositions have been identified which probably have different functions.

The protein localises to the cellular thylakoid membrane. The catalysed reaction is a plastoquinone + NADH + (n+1) H(+)(in) = a plastoquinol + NAD(+) + n H(+)(out). It carries out the reaction a plastoquinone + NADPH + (n+1) H(+)(in) = a plastoquinol + NADP(+) + n H(+)(out). Its function is as follows. NDH-1 shuttles electrons from an unknown electron donor, via FMN and iron-sulfur (Fe-S) centers, to quinones in the respiratory and/or the photosynthetic chain. The immediate electron acceptor for the enzyme in this species is believed to be plastoquinone. Couples the redox reaction to proton translocation, and thus conserves the redox energy in a proton gradient. Cyanobacterial NDH-1 also plays a role in inorganic carbon-concentration. The polypeptide is NAD(P)H-quinone oxidoreductase subunit M (Prochlorococcus marinus (strain MIT 9313)).